Here is a 950-residue protein sequence, read N- to C-terminus: Glycine dehydrogenase (decarboxylating) (950 aa).

Residue Lys-698 is modified to N6-(pyridoxal phosphate)lysine.

It belongs to the GcvP family. The glycine cleavage system is composed of four proteins: P, T, L and H. It depends on pyridoxal 5'-phosphate as a cofactor.

The catalysed reaction is N(6)-[(R)-lipoyl]-L-lysyl-[glycine-cleavage complex H protein] + glycine + H(+) = N(6)-[(R)-S(8)-aminomethyldihydrolipoyl]-L-lysyl-[glycine-cleavage complex H protein] + CO2. Functionally, the glycine cleavage system catalyzes the degradation of glycine. The P protein binds the alpha-amino group of glycine through its pyridoxal phosphate cofactor; CO(2) is released and the remaining methylamine moiety is then transferred to the lipoamide cofactor of the H protein. In Neisseria meningitidis serogroup C (strain 053442), this protein is Glycine dehydrogenase (decarboxylating).